A 400-amino-acid chain; its full sequence is MIIKPKIRGFICTTAHPVGCEENVKEQIAYTKAQGPIANAPKRVLVVGSSSGYGLSSRIAAAFGGDAATIGVFFEKPSTEKKPGTAGWYNSAAFDKLAKEEGLYSKSLNGDAFSHEAKQKTIDLIKADLGQIDMVVYSLASPVRKMPETGEVVRSSLKPMGETYTATAVDTNKDVLIEASIEPATEQEIADTVTVMGGQDWELWINALSEAGVLADGCKTVAYSYIGTEITWPIYWHGALGKAKMDLDRAASELNNKLSATGGSANVAVLKSVVTQASSAIPVMPLYIAMVFKKMREEGVHEGCMQQIYRMFTQRLYKADGTAPEVDEENRLRLDDWELREDIQKHCRDLWSSVTNENLFEVADYQEYKDEFIKLFGFGIDSIDYDIDVNTLIEFDVESI.

NAD(+) is bound by residues 48-53 (GSSSGY), 74-75 (FE), 111-112 (DA), and 139-140 (LA). A substrate-binding site is contributed by Tyr-225. Tyr-235 (proton donor) is an active-site residue. Residues Lys-244 and 273 to 275 (VVT) each bind NAD(+).

This sequence belongs to the TER reductase family. Monomer.

The catalysed reaction is a 2,3-saturated acyl-[ACP] + NAD(+) = a (2E)-enoyl-[ACP] + NADH + H(+). It functions in the pathway lipid metabolism; fatty acid biosynthesis. Functionally, involved in the final reduction of the elongation cycle of fatty acid synthesis (FAS II). Catalyzes the reduction of a carbon-carbon double bond in an enoyl moiety that is covalently linked to an acyl carrier protein (ACP). This Photobacterium profundum (strain SS9) protein is Enoyl-[acyl-carrier-protein] reductase [NADH] 1.